The chain runs to 174 residues: Nucleoside-triphosphatase THEP1 (174 aa).

ATP-binding positions include 7 to 14 (GRPGVGKT) and 94 to 101 (LIIVDEIG).

The protein belongs to the THEP1 NTPase family.

It carries out the reaction a ribonucleoside 5'-triphosphate + H2O = a ribonucleoside 5'-diphosphate + phosphate + H(+). Functionally, has nucleotide phosphatase activity towards ATP, GTP, CTP, TTP and UTP. May hydrolyze nucleoside diphosphates with lower efficiency. The chain is Nucleoside-triphosphatase THEP1 from Thermotoga maritima (strain ATCC 43589 / DSM 3109 / JCM 10099 / NBRC 100826 / MSB8).